Reading from the N-terminus, the 439-residue chain is Putrescine transporter PotE (439 aa).

12 helical membrane passes run 10–30 (GVVQLTILTMVNMMGSGIIML), 40–60 (ISIISWLVTAVGSMALAWAFA), 91–111 (TYGVSLLIANVAIAISAVGYG), 114–134 (LLGASLSPVQIGLATIGVLWI), 152–172 (ITVWGVIIPVVGLCIIGWFWF), 186–206 (APFFSAVGSSIAMTLWAFLGL), 225–245 (IAVLGGTLGAAVIYIVSTNVI), 276–296 (VIMALMVMSCCGSLLGWQFTI), 321–341 (APVQGMLTIVIIQSGLALMTI), 354–374 (NLAVVTNIIPYILSMAALVII), 387–407 (VANFVAFVGAMYSFYALYSSG), and 410–430 (AMLYGSIVTFLGWTLYGLVSP).

It belongs to the amino acid-polyamine-organocation (APC) superfamily. Basic amino acid/polyamine antiporter (APA) (TC 2.A.3.2) family.

It localises to the cell inner membrane. The catalysed reaction is putrescine(in) + H(+)(in) = putrescine(out) + H(+)(out). The enzyme catalyses putrescine(in) + L-ornithine(out) = putrescine(out) + L-ornithine(in). In terms of biological role, catalyzes both the uptake and excretion of putrescine. The uptake of putrescine is dependent on the membrane potential and the excretion involves putrescine-ornithine antiporter activity. The protein is Putrescine transporter PotE of Escherichia coli O6:H1 (strain CFT073 / ATCC 700928 / UPEC).